Reading from the N-terminus, the 507-residue chain is ATP synthase subunit alpha, chloroplastic (507 aa).

170–177 contributes to the ATP binding site; sequence GDRQTGKT.

Belongs to the ATPase alpha/beta chains family. F-type ATPases have 2 components, CF(1) - the catalytic core - and CF(0) - the membrane proton channel. CF(1) has five subunits: alpha(3), beta(3), gamma(1), delta(1), epsilon(1). CF(0) has four main subunits: a, b, b' and c.

The protein localises to the plastid. It localises to the chloroplast thylakoid membrane. The catalysed reaction is ATP + H2O + 4 H(+)(in) = ADP + phosphate + 5 H(+)(out). In terms of biological role, produces ATP from ADP in the presence of a proton gradient across the membrane. The alpha chain is a regulatory subunit. In Nicotiana tomentosiformis (Tobacco), this protein is ATP synthase subunit alpha, chloroplastic.